The sequence spans 150 residues: Lymphotoxin-beta (150 aa).

The THD domain maps to 1-149 (AWITGQGLGW…GKTFFGAVMV (149 aa)). Asn128 carries N-linked (GlcNAc...) asparagine glycosylation.

It belongs to the tumor necrosis factor family. Heterotrimer of either two LTB and one LTA subunits or (less prevalent) two LTA and one LTB subunits.

It localises to the membrane. Its function is as follows. Cytokine that binds to LTBR/TNFRSF3. May play a specific role in immune response regulation. Provides the membrane anchor for the attachment of the heterotrimeric complex to the cell surface. This Sus scrofa (Pig) protein is Lymphotoxin-beta (LTB).